A 128-amino-acid polypeptide reads, in one-letter code: Sm-like protein LSM1B (128 aa).

Positions Tyr10–Glu85 constitute a Sm domain.

The protein belongs to the snRNP Sm proteins family. Component of the heptameric LSM1-LSM7 complex that forms a seven-membered ring structure with a donut shape. The LSM subunits are arranged in the order LSM1, LSM2, LSM3, LSM6, LSM5, LSM7 and LSM4. LSM1B subunit interacts only with its two neighboring subunits, LSM2 and LSM4. As to expression, expressed in roots, leaves, stems, flowers and siliques.

It is found in the cytoplasm. It localises to the P-body. Its function is as follows. Component of the cytoplasmic LSM1-LSM7 complex which is involved in mRNA degradation by promoting decapping and leading to accurate 5'-3' mRNA decay. LSM1A and LSM1B are essential for the formation of the cytoplasmic LSM1-LSM7 complex which regulates developmental gene expression by the decapping of specific development-related transcripts. Required for P-body formation during heat stress. This chain is Sm-like protein LSM1B, found in Arabidopsis thaliana (Mouse-ear cress).